Reading from the N-terminus, the 173-residue chain is Zinc finger matrin-type protein 5 (173 aa).

The C3H1-type zinc finger occupies 51 to 79 (ERSKEVCRKFVQTGQCVFGTSCRFSHMSE). The disordered stretch occupies residues 83–111 (KMLEQKIDDEKRQKEDPDQDGSSERSVDE).

As to quaternary structure, component of the U11/U12 snRNPs that are part of the U12-type spliceosome.

It localises to the nucleus. This chain is Zinc finger matrin-type protein 5 (zmat5), found in Danio rerio (Zebrafish).